The primary structure comprises 237 residues: Casparian strip membrane protein 2 (237 aa).

Residues 1 to 48 (MSGSDTSGSVHVDEHGHGHGKASSSYDGAGAPAPAPAPFQGHRKAGSG) form a disordered region. Residues 1 to 69 (MSGSDTSGSV…GSGGDGLRRC (69 aa)) are Cytoplasmic-facing. A helical membrane pass occupies residues 70–90 (LGLIDFVLRVAAFGPTLAAAI). The Extracellular segment spans residues 91–117 (SIGTSDERLSVFTNYFQFRARFDDFPA). The helical transmembrane segment at 118–138 (FEFFIVANAIAAGYMVLSLPF) threads the bilayer. Over 139–152 (SAATIMSSKATGVK) the chain is Cytoplasmic. A helical transmembrane segment spans residues 153–173 (LLLLICDTIMVGLLTAAASAA). The Extracellular segment spans residues 174-205 (AAMVYVAHEGNLRANWVPICLQFHGFCQRTSG). Residues 206 to 226 (AVIASFLAVFVLMVLIVMAAF) form a helical membrane-spanning segment. Topologically, residues 227-237 (TMPRRTHHTAS) are cytoplasmic.

The protein belongs to the Casparian strip membrane proteins (CASP) family. In terms of assembly, homodimer and heterodimers.

It localises to the cell membrane. Regulates membrane-cell wall junctions and localized cell wall deposition. Required for establishment of the Casparian strip membrane domain (CSD) and the subsequent formation of Casparian strips, a cell wall modification of the root endodermis that determines an apoplastic barrier between the intraorganismal apoplasm and the extraorganismal apoplasm and prevents lateral diffusion. In Oryza sativa subsp. japonica (Rice), this protein is Casparian strip membrane protein 2.